The sequence spans 212 residues: ATP-dependent Clp protease proteolytic subunit (212 aa).

The active-site Nucleophile is serine 109. The active site involves histidine 134.

Belongs to the peptidase S14 family. Fourteen ClpP subunits assemble into 2 heptameric rings which stack back to back to give a disk-like structure with a central cavity, resembling the structure of eukaryotic proteasomes.

The protein resides in the cytoplasm. The enzyme catalyses Hydrolysis of proteins to small peptides in the presence of ATP and magnesium. alpha-casein is the usual test substrate. In the absence of ATP, only oligopeptides shorter than five residues are hydrolyzed (such as succinyl-Leu-Tyr-|-NHMec, and Leu-Tyr-Leu-|-Tyr-Trp, in which cleavage of the -Tyr-|-Leu- and -Tyr-|-Trp bonds also occurs).. Its function is as follows. Cleaves peptides in various proteins in a process that requires ATP hydrolysis. Has a chymotrypsin-like activity. Plays a major role in the degradation of misfolded proteins. This Bdellovibrio bacteriovorus (strain ATCC 15356 / DSM 50701 / NCIMB 9529 / HD100) protein is ATP-dependent Clp protease proteolytic subunit.